The chain runs to 131 residues: Small ribosomal subunit protein uS8 (131 aa).

The protein belongs to the universal ribosomal protein uS8 family. Part of the 30S ribosomal subunit. Contacts proteins S5 and S12.

Functionally, one of the primary rRNA binding proteins, it binds directly to 16S rRNA central domain where it helps coordinate assembly of the platform of the 30S subunit. The polypeptide is Small ribosomal subunit protein uS8 (Campylobacter lari (strain RM2100 / D67 / ATCC BAA-1060)).